The sequence spans 711 residues: DNA ligase (711 aa).

NAD(+)-binding positions include 39–43 (DAEYD), 88–89 (SL), and glutamate 119. Lysine 121 functions as the N6-AMP-lysine intermediate in the catalytic mechanism. Arginine 142, glutamate 179, lysine 295, and lysine 319 together coordinate NAD(+). Zn(2+)-binding residues include cysteine 416, cysteine 419, cysteine 434, and cysteine 440. A BRCT domain is found at 630–711 (ESVSSLAGRA…LRELLAGAGA (82 aa)).

Belongs to the NAD-dependent DNA ligase family. LigA subfamily. Requires Mg(2+) as cofactor. The cofactor is Mn(2+).

It catalyses the reaction NAD(+) + (deoxyribonucleotide)n-3'-hydroxyl + 5'-phospho-(deoxyribonucleotide)m = (deoxyribonucleotide)n+m + AMP + beta-nicotinamide D-nucleotide.. Its function is as follows. DNA ligase that catalyzes the formation of phosphodiester linkages between 5'-phosphoryl and 3'-hydroxyl groups in double-stranded DNA using NAD as a coenzyme and as the energy source for the reaction. It is essential for DNA replication and repair of damaged DNA. The sequence is that of DNA ligase from Halorhodospira halophila (strain DSM 244 / SL1) (Ectothiorhodospira halophila (strain DSM 244 / SL1)).